The chain runs to 306 residues: L-lactate dehydrogenase (306 aa).

NAD(+) is bound by residues V11, D32, K37, and G76 to A77. 2 residues coordinate substrate: Q79 and R85. NAD(+)-binding positions include S98, V115–N117, and S140. A substrate-binding site is contributed by N117–D120. Substrate is bound at residue D145–R148. Residues R150 and H165 each contribute to the beta-D-fructose 1,6-bisphosphate site. H172 serves as the catalytic Proton acceptor. Y214 is subject to Phosphotyrosine. T223 serves as a coordination point for substrate.

This sequence belongs to the LDH/MDH superfamily. LDH family. As to quaternary structure, homotetramer.

It localises to the cytoplasm. The catalysed reaction is (S)-lactate + NAD(+) = pyruvate + NADH + H(+). It participates in fermentation; pyruvate fermentation to lactate; (S)-lactate from pyruvate: step 1/1. Its activity is regulated as follows. Allosterically activated by fructose 1,6-bisphosphate (FBP). Functionally, catalyzes the conversion of lactate to pyruvate. This Synechococcus sp. (strain JA-3-3Ab) (Cyanobacteria bacterium Yellowstone A-Prime) protein is L-lactate dehydrogenase.